Reading from the N-terminus, the 506-residue chain is Maturase K (506 aa).

Belongs to the intron maturase 2 family. MatK subfamily.

Its subcellular location is the plastid. The protein localises to the chloroplast. In terms of biological role, usually encoded in the trnK tRNA gene intron. Probably assists in splicing its own and other chloroplast group II introns. The chain is Maturase K from Calluna vulgaris (Heather).